The chain runs to 172 residues: Probable chorismate pyruvate-lyase (172 aa).

Positions 37, 79, 117, and 158 each coordinate substrate.

The protein belongs to the UbiC family.

Its subcellular location is the cytoplasm. The enzyme catalyses chorismate = 4-hydroxybenzoate + pyruvate. Its pathway is cofactor biosynthesis; ubiquinone biosynthesis. Functionally, removes the pyruvyl group from chorismate, with concomitant aromatization of the ring, to provide 4-hydroxybenzoate (4HB) for the ubiquinone pathway. The polypeptide is Probable chorismate pyruvate-lyase (Bartonella quintana (strain Toulouse) (Rochalimaea quintana)).